A 449-amino-acid chain; its full sequence is Sensor protein QseC (449 aa).

Topologically, residues 1-12 (MKFTQRLSLRVR) are cytoplasmic. The chain crosses the membrane as a helical span at residues 13-33 (LTLIFLILASVTWLLSSFVAW). Residues 34 to 156 (KQTTDNVDEL…QEWEYREDMA (123 aa)) are Periplasmic-facing. The chain crosses the membrane as a helical span at residues 157–177 (LAIVAGQLIPWLVALPVMLII). The Cytoplasmic segment spans residues 178–449 (MMVLLGRELA…QGGFEAKVSW (272 aa)). The Histidine kinase domain occupies 243 to 449 (DAAHELRSPL…QGGFEAKVSW (207 aa)). At H246 the chain carries Phosphohistidine; by autocatalysis.

The protein localises to the cell inner membrane. It carries out the reaction ATP + protein L-histidine = ADP + protein N-phospho-L-histidine.. Functionally, member of a two-component regulatory system QseB/QseC. Activates the flagella regulon by activating transcription of FlhDC. May activate QseB by phosphorylation. In Escherichia coli O157:H7, this protein is Sensor protein QseC (qseC).